A 246-amino-acid polypeptide reads, in one-letter code: Ribonuclease 3 (246 aa).

The RNase III domain maps to 18 to 147 (FQELQKKIGI…FIGALYLDQG (130 aa)). Glu-60 provides a ligand contact to Mg(2+). Residue Asp-64 is part of the active site. Mg(2+)-binding residues include Asp-133 and Glu-136. Glu-136 is an active-site residue. Residues 173 to 242 (DFKSQLQELV…AQMALETLRA (70 aa)) enclose the DRBM domain.

Belongs to the ribonuclease III family. In terms of assembly, homodimer. Requires Mg(2+) as cofactor.

The protein resides in the cytoplasm. The catalysed reaction is Endonucleolytic cleavage to 5'-phosphomonoester.. Digests double-stranded RNA. Involved in the processing of primary rRNA transcript to yield the immediate precursors to the large and small rRNAs (23S and 16S). Processes some mRNAs, and tRNAs when they are encoded in the rRNA operon. Processes pre-crRNA and tracrRNA of type II CRISPR loci if present in the organism. This Geobacillus thermodenitrificans (strain NG80-2) protein is Ribonuclease 3.